A 506-amino-acid polypeptide reads, in one-letter code: Magnetosome-associated protein MamJ (506 aa).

Residues 1–12 are compositionally biased toward basic and acidic residues; sequence MANNRRDRDKGD. 2 disordered regions span residues 1-36 and 63-93; these read MANN…SVTV and PWSA…VGDL. Positions 13–25 are enriched in gly residues; sequence GSQGEGLSAGGGM. Acidic repeat repeat units follow at residues 150 to 173, 174 to 197, 198 to 221, 222 to 245, 246 to 269, 270 to 293, 294 to 317, and 318 to 341; these read EAEP…DVVA and EAEP…EVVA. One copy of the Acidic repeat 8.5 repeat lies at 342–355; that stretch reads EAEPEPELPVAEPE. Positions 405-424 are disordered; it reads VAPAAKPVREPAKKRKAPPV.

It belongs to the magnetosome MamJ protein family. Forms homooligomers. Interacts with MamK.

The protein localises to the magnetosome. In terms of biological role, regulates the dynamic behavior of MamK filaments; paralog LimJ also promotes MamK turnover. At least one other protein besides MamJ and LimJ is required for MamK turnover. May connect magnetosomes to MamK filaments. Moves from the cell poles towards midcell; movement does not depend on the treadmilling ability of MamK, suggesting MamJ associates and disassociates continuously from the MamK filament. This Paramagnetospirillum magneticum (strain ATCC 700264 / AMB-1) (Magnetospirillum magneticum) protein is Magnetosome-associated protein MamJ (mamJ).